The following is a 714-amino-acid chain: Fatty acid oxidation complex subunit alpha (714 aa).

Positions 1-190 (MEMASAFTLN…KLGLVDDVVP (190 aa)) are enoyl-CoA hydratase. Residues 306–714 (APLNSVGILG…FWKTTATDLQ (409 aa)) are 3-hydroxyacyl-CoA dehydrogenase.

In the N-terminal section; belongs to the enoyl-CoA hydratase/isomerase family. The protein in the central section; belongs to the 3-hydroxyacyl-CoA dehydrogenase family. As to quaternary structure, heterotetramer of two alpha chains (FadJ) and two beta chains (FadI).

It is found in the cytoplasm. The enzyme catalyses a (3S)-3-hydroxyacyl-CoA = a (2E)-enoyl-CoA + H2O. The catalysed reaction is a 4-saturated-(3S)-3-hydroxyacyl-CoA = a (3E)-enoyl-CoA + H2O. It catalyses the reaction a (3S)-3-hydroxyacyl-CoA + NAD(+) = a 3-oxoacyl-CoA + NADH + H(+). It carries out the reaction (3S)-3-hydroxybutanoyl-CoA = (3R)-3-hydroxybutanoyl-CoA. Its pathway is lipid metabolism; fatty acid beta-oxidation. In terms of biological role, catalyzes the formation of a hydroxyacyl-CoA by addition of water on enoyl-CoA. Also exhibits 3-hydroxyacyl-CoA epimerase and 3-hydroxyacyl-CoA dehydrogenase activities. This Shigella flexneri protein is Fatty acid oxidation complex subunit alpha.